The following is a 254-amino-acid chain: Alcohol dehydrogenase (254 aa).

Residue 10 to 33 coordinates NAD(+); the sequence is FVAGLGGIGLDTSREIVKSGPKNL. Ser-138 contacts substrate. The active-site Proton acceptor is Tyr-151.

It belongs to the short-chain dehydrogenases/reductases (SDR) family. Homodimer.

It carries out the reaction a primary alcohol + NAD(+) = an aldehyde + NADH + H(+). The enzyme catalyses a secondary alcohol + NAD(+) = a ketone + NADH + H(+). This Drosophila grimshawi (Hawaiian fruit fly) protein is Alcohol dehydrogenase (Adh).